Reading from the N-terminus, the 156-residue chain is Acyl carrier protein, mitochondrial (156 aa).

Residues 1 to 68 (MASRVLCACV…GTVTHLCRQY (68 aa)) constitute a mitochondrion transit peptide. The region spanning 77–152 (DGIKDRVLYV…EIVDYIADKK (76 aa)) is the Carrier domain. Lys-88 carries the post-translational modification N6-acetyllysine. O-(pantetheine 4'-phosphoryl)serine is present on Ser-112.

It belongs to the acyl carrier protein (ACP) family. As to quaternary structure, mammalian complex I is composed of 45 different subunits. Interacts with ETFRF1. Identified in a complex composed of MALSU1, MIEF1 upstream open reading frame protein and NDUFAB1; within the trimeric complex, MIEF1 upstream open reading frame protein functions as a bridging scaffold that interacts with MALSU1 on one side, and with NDUFAB1 on the other side. The complex interacts with the mitochondrial large ribosomal subunit. Interacts with alpha-1-microglobulin chain; this interaction is required for the maintenance of mitochondrial redox homeostasis. Component of the mitochondrial core iron-sulfur cluster (ISC) complex composed of NFS1, LYRM4, NDUFAB1, ISCU, FXN, and FDX2; this complex is a heterohexamer containing two copies of each monomer. Component of the cyteine desulfurase complex composed of NFS1, LYRM4 and NDUFAB1; this complex contributes to the stability and cysteine desulfurase activity of NFS1. In terms of processing, phosphopantetheinylation at Ser-112 is essential for interactions with LYR motif-containing proteins.

It localises to the mitochondrion. Functionally, carrier of the growing fatty acid chain in fatty acid biosynthesis. Accessory and non-catalytic subunit of the mitochondrial membrane respiratory chain NADH dehydrogenase (Complex I), which functions in the transfer of electrons from NADH to the respiratory chain. Accessory protein, of the core iron-sulfur cluster (ISC) assembly complex, that regulates, in association with LYRM4, the stability and the cysteine desulfurase activity of NFS1 and participates in the [2Fe-2S] clusters assembly on the scaffolding protein ISCU. The core iron-sulfur cluster (ISC) assembly complex is involved in the de novo synthesis of a [2Fe-2S] cluster, the first step of the mitochondrial iron-sulfur protein biogenesis. This process is initiated by the cysteine desulfurase complex (NFS1:LYRM4:NDUFAB1) that produces persulfide which is delivered on the scaffold protein ISCU in a FXN-dependent manner. Then this complex is stabilized by FDX2 which provides reducing equivalents to accomplish the [2Fe-2S] cluster assembly. Finally, the [2Fe-2S] cluster is transferred from ISCU to chaperone proteins, including HSCB, HSPA9 and GLRX5. The protein is Acyl carrier protein, mitochondrial of Mus musculus (Mouse).